A 156-amino-acid chain; its full sequence is Ribosomal RNA large subunit methyltransferase H (156 aa).

S-adenosyl-L-methionine is bound by residues leucine 73, glycine 104, and 123-128 (ISSMTL).

This sequence belongs to the RNA methyltransferase RlmH family. In terms of assembly, homodimer.

It is found in the cytoplasm. It catalyses the reaction pseudouridine(1915) in 23S rRNA + S-adenosyl-L-methionine = N(3)-methylpseudouridine(1915) in 23S rRNA + S-adenosyl-L-homocysteine + H(+). Its function is as follows. Specifically methylates the pseudouridine at position 1915 (m3Psi1915) in 23S rRNA. The sequence is that of Ribosomal RNA large subunit methyltransferase H from Janthinobacterium sp. (strain Marseille) (Minibacterium massiliensis).